We begin with the raw amino-acid sequence, 149 residues long: Probable flagellum biosynthesis repressor protein FlbT (149 aa).

The protein belongs to the FlbT family.

Has a post-transcriptional repressor function in flagellum biogenesis. Associates with the 5'-UTR of fljK mRNA and promotes its degradation. The polypeptide is Probable flagellum biosynthesis repressor protein FlbT (Rhizobium leguminosarum bv. trifolii (strain WSM2304)).